Consider the following 876-residue polypeptide: Leucine--tRNA ligase (876 aa).

Positions 43–53 (PYPSGRIHMGH) match the 'HIGH' region motif. The short motif at 632 to 636 (KMSKS) is the 'KMSKS' region element. Lysine 635 is an ATP binding site.

The protein belongs to the class-I aminoacyl-tRNA synthetase family.

The protein localises to the cytoplasm. It catalyses the reaction tRNA(Leu) + L-leucine + ATP = L-leucyl-tRNA(Leu) + AMP + diphosphate. This Agrobacterium fabrum (strain C58 / ATCC 33970) (Agrobacterium tumefaciens (strain C58)) protein is Leucine--tRNA ligase.